Consider the following 313-residue polypeptide: Malate dehydrogenase (313 aa).

Residues 8–13 (GAGNVG) and Asp33 contribute to the NAD(+) site. 2 residues coordinate substrate: Arg83 and Arg89. NAD(+) is bound by residues Asn96 and 119-121 (ISN). Residues Asn121 and Arg152 each contribute to the substrate site. The active-site Proton acceptor is the His176.

This sequence belongs to the LDH/MDH superfamily. MDH type 3 family.

The enzyme catalyses (S)-malate + NAD(+) = oxaloacetate + NADH + H(+). In terms of biological role, catalyzes the reversible oxidation of malate to oxaloacetate. This is Malate dehydrogenase from Parabacteroides distasonis (strain ATCC 8503 / DSM 20701 / CIP 104284 / JCM 5825 / NCTC 11152).